The chain runs to 147 residues: Cyanate hydratase (147 aa).

Active-site residues include arginine 88, glutamate 91, and serine 114.

It belongs to the cyanase family.

It catalyses the reaction cyanate + hydrogencarbonate + 3 H(+) = NH4(+) + 2 CO2. In terms of biological role, catalyzes the reaction of cyanate with bicarbonate to produce ammonia and carbon dioxide. This Prochlorococcus marinus (strain NATL2A) protein is Cyanate hydratase.